The sequence spans 425 residues: Oxytetracycline polyketide putative beta-ketoacyl synthase 1 (425 aa).

Positions 7 to 420 (ARRVVITGIG…GFQSAIVLTE (414 aa)) constitute a Ketosynthase family 3 (KS3) domain. Catalysis depends on for beta-ketoacyl synthase activity residues Cys-173, His-313, and His-350.

This sequence belongs to the thiolase-like superfamily. Beta-ketoacyl-ACP synthases family.

It functions in the pathway antibiotic biosynthesis; oxytetracycline biosynthesis. This chain is Oxytetracycline polyketide putative beta-ketoacyl synthase 1, found in Streptomyces rimosus.